Consider the following 521-residue polypeptide: CDP-diacylglycerol--glycerol-3-phosphate 3-phosphatidyltransferase (521 aa).

Residue 91–98 (ASLYLGKS) participates in ATP binding. 2 consecutive PLD phosphodiesterase domains span residues 177–203 (GLGL…SNDY) and 419–457 (NGWS…TRRA). Active-site residues include His182, Lys184, and Asp189.

It belongs to the CDP-alcohol phosphatidyltransferase class-II family.

It localises to the mitochondrion. It catalyses the reaction a CDP-1,2-diacyl-sn-glycerol + sn-glycerol 3-phosphate = a 1,2-diacyl-sn-glycero-3-phospho-(1'-sn-glycero-3'-phosphate) + CMP + H(+). The protein operates within phospholipid metabolism; phosphatidylglycerol biosynthesis; phosphatidylglycerol from CDP-diacylglycerol: step 1/2. Essential for the viability of mitochondrial petite mutant. Catalyzes the committed step to the synthesis of the acidic phospholipids. This chain is CDP-diacylglycerol--glycerol-3-phosphate 3-phosphatidyltransferase (PGS1), found in Saccharomyces cerevisiae (strain ATCC 204508 / S288c) (Baker's yeast).